The following is a 440-amino-acid chain: uncharacterized protein (440 aa).

10 helical membrane passes run 1-21 (MLLV…QLYR), 29-49 (TVFI…SAFE), 70-90 (LLQM…IARI), 101-121 (VGVL…GIAM), 179-199 (TSII…LSLG), 226-246 (FVIR…AATS), 258-278 (IVAS…LLFF), 343-363 (IYPA…PFSF), 366-386 (ILTL…VGGG), and 389-409 (FAAI…GLLI).

Belongs to the dicarboxylate/amino acid:cation symporter (DAACS) (TC 2.A.23) family.

The protein resides in the cell membrane. This is an uncharacterized protein from Haemophilus influenzae (strain ATCC 51907 / DSM 11121 / KW20 / Rd).